Here is a 638-residue protein sequence, read N- to C-terminus: Probable potassium transport system protein Kup (638 aa).

A run of 12 helical transmembrane segments spans residues 25–45 (LAIA…LYSL), 65–85 (VISL…LLFV), 114–134 (AGAL…DAVI), 152–172 (PHLS…LFWI), 184–204 (FGPI…YHIV), 226–246 (LLQA…AEAL), 262–282 (AYGL…ALLI), 291–311 (PFFL…STVA), 352–372 (IYVP…VVGF), 382–402 (YGIA…VVMV), 410–430 (LLVG…FGAN), and 434–454 (VAQG…LLMT).

This sequence belongs to the HAK/KUP transporter (TC 2.A.72) family.

The protein resides in the cell inner membrane. The enzyme catalyses K(+)(in) + H(+)(in) = K(+)(out) + H(+)(out). Transport of potassium into the cell. Likely operates as a K(+):H(+) symporter. This is Probable potassium transport system protein Kup from Burkholderia cenocepacia (strain HI2424).